The following is a 140-amino-acid chain: UPF0134 protein MPN_094 (140 aa).

The protein belongs to the UPF0134 family.

The chain is UPF0134 protein MPN_094 from Mycoplasma pneumoniae (strain ATCC 29342 / M129 / Subtype 1) (Mycoplasmoides pneumoniae).